We begin with the raw amino-acid sequence, 344 residues long: Aspartate-semialdehyde dehydrogenase (344 aa).

Residues 10-13 (TGQV) and 38-39 (RS) contribute to the NADP(+) site. A phosphate-binding site is contributed by Arg-101. The active-site Acyl-thioester intermediate is Cys-131. Gln-158 contributes to the substrate binding site. 161 to 162 (SG) serves as a coordination point for NADP(+). A phosphate-binding site is contributed by Lys-228. Arg-250 serves as a coordination point for substrate. His-257 serves as the catalytic Proton acceptor. Asn-326 contributes to the NADP(+) binding site.

This sequence belongs to the aspartate-semialdehyde dehydrogenase family. In terms of assembly, homodimer.

The catalysed reaction is L-aspartate 4-semialdehyde + phosphate + NADP(+) = 4-phospho-L-aspartate + NADPH + H(+). It participates in amino-acid biosynthesis; L-lysine biosynthesis via DAP pathway; (S)-tetrahydrodipicolinate from L-aspartate: step 2/4. Its pathway is amino-acid biosynthesis; L-methionine biosynthesis via de novo pathway; L-homoserine from L-aspartate: step 2/3. It functions in the pathway amino-acid biosynthesis; L-threonine biosynthesis; L-threonine from L-aspartate: step 2/5. In terms of biological role, catalyzes the NADPH-dependent formation of L-aspartate-semialdehyde (L-ASA) by the reductive dephosphorylation of L-aspartyl-4-phosphate. The polypeptide is Aspartate-semialdehyde dehydrogenase (Corynebacterium glutamicum (strain ATCC 13032 / DSM 20300 / JCM 1318 / BCRC 11384 / CCUG 27702 / LMG 3730 / NBRC 12168 / NCIMB 10025 / NRRL B-2784 / 534)).